A 409-amino-acid polypeptide reads, in one-letter code: Phosphatidylserine decarboxylase proenzyme, mitochondrial (409 aa).

A mitochondrion-targeting transit peptide spans 1-52; sequence MAASVCRPYVRSLPGVMPWRSSSCHYEYTAMHHFLGSFQKLPFEPFNTGARK. The Mitochondrial matrix portion of the chain corresponds to 53–63; that stretch reads IHTAPVRSLFL. A helical transmembrane segment spans residues 64–82; the sequence is LRPVPILLATGGGYAGYRQ. Over 83–409 the chain is Mitochondrial intermembrane; sequence YEKYRDQKLE…IRFGEALGSL (327 aa). Residues Asp191, His267, and Ser378 each act as charge relay system; for autoendoproteolytic cleavage activity in the active site. Ser378 functions as the Schiff-base intermediate with substrate; via pyruvic acid; for decarboxylase activity in the catalytic mechanism. The residue at position 378 (Ser378) is a Pyruvic acid (Ser); by autocatalysis.

The protein belongs to the phosphatidylserine decarboxylase family. PSD-B subfamily. Eukaryotic type I sub-subfamily. Heterodimer of a large membrane-associated beta subunit and a small pyruvoyl-containing alpha subunit. It depends on pyruvate as a cofactor. Post-translationally, is synthesized initially as an inactive proenzyme. Formation of the active enzyme involves a self-maturation process in which the active site pyruvoyl group is generated from an internal serine residue via an autocatalytic post-translational modification. Two non-identical subunits are generated from the proenzyme in this reaction, and the pyruvate is formed at the N-terminus of the alpha chain, which is derived from the carboxyl end of the proenzyme. The autoendoproteolytic cleavage occurs by a canonical serine protease mechanism, in which the side chain hydroxyl group of the serine supplies its oxygen atom to form the C-terminus of the beta chain, while the remainder of the serine residue undergoes an oxidative deamination to produce ammonia and the pyruvoyl prosthetic group on the alpha chain. During this reaction, the Ser that is part of the protease active site of the proenzyme becomes the pyruvoyl prosthetic group, which constitutes an essential element of the active site of the mature decarboxylase.

It is found in the mitochondrion inner membrane. It localises to the cytoplasm. The protein localises to the lipid droplet. The catalysed reaction is a 1,2-diacyl-sn-glycero-3-phospho-L-serine + H(+) = a 1,2-diacyl-sn-glycero-3-phosphoethanolamine + CO2. It participates in phospholipid metabolism; phosphatidylethanolamine biosynthesis. Its function is as follows. Catalyzes the formation of phosphatidylethanolamine (PtdEtn) from phosphatidylserine (PtdSer). Plays a central role in phospholipid metabolism and in the interorganelle trafficking of phosphatidylserine. May be involved in lipid droplet biogenesis at the endoplasmic reticulum membrane. The sequence is that of Phosphatidylserine decarboxylase proenzyme, mitochondrial from Cricetulus griseus (Chinese hamster).